We begin with the raw amino-acid sequence, 205 residues long: Inactive ribonuclease-like protein 9 (205 aa).

A signal peptide spans 1-24 (MMLITTHSLLLLLLLLQLLQPLQF). 3 disulfides stabilise this stretch: cysteine 97–cysteine 152, cysteine 115–cysteine 167, and cysteine 122–cysteine 129. Asparagine 130 and asparagine 142 each carry an N-linked (GlcNAc...) asparagine glycan.

This sequence belongs to the pancreatic ribonuclease family.

The protein localises to the secreted. Its function is as follows. Does not exhibit any ribonuclease activity. The protein is Inactive ribonuclease-like protein 9 (RNASE9) of Cebus capucinus (White-faced sapajou).